Consider the following 282-residue polypeptide: Bifunctional protein FolD (282 aa).

NADP(+) contacts are provided by residues Asn-165 to Ser-167, Ser-190, and Ile-231.

The protein belongs to the tetrahydrofolate dehydrogenase/cyclohydrolase family. In terms of assembly, homodimer.

The enzyme catalyses (6R)-5,10-methylene-5,6,7,8-tetrahydrofolate + NADP(+) = (6R)-5,10-methenyltetrahydrofolate + NADPH. It catalyses the reaction (6R)-5,10-methenyltetrahydrofolate + H2O = (6R)-10-formyltetrahydrofolate + H(+). It participates in one-carbon metabolism; tetrahydrofolate interconversion. Functionally, catalyzes the oxidation of 5,10-methylenetetrahydrofolate to 5,10-methenyltetrahydrofolate and then the hydrolysis of 5,10-methenyltetrahydrofolate to 10-formyltetrahydrofolate. This chain is Bifunctional protein FolD, found in Clostridium botulinum (strain ATCC 19397 / Type A).